Consider the following 130-residue polypeptide: Small ribosomal subunit protein uS9 (130 aa).

The segment at 109–130 (RKKERKKYGQRAARARYQYSKR) is disordered.

Belongs to the universal ribosomal protein uS9 family.

This Nitratidesulfovibrio vulgaris (strain DSM 19637 / Miyazaki F) (Desulfovibrio vulgaris) protein is Small ribosomal subunit protein uS9.